We begin with the raw amino-acid sequence, 72 residues long: Translation initiation factor IF-1 2 (72 aa).

An S1-like domain is found at 1 to 72 (MAKDDVIQMQ…SRARIVFRTK (72 aa)).

Belongs to the IF-1 family. As to quaternary structure, component of the 30S ribosomal translation pre-initiation complex which assembles on the 30S ribosome in the order IF-2 and IF-3, IF-1 and N-formylmethionyl-tRNA(fMet); mRNA recruitment can occur at any time during PIC assembly.

The protein localises to the cytoplasm. One of the essential components for the initiation of protein synthesis. Stabilizes the binding of IF-2 and IF-3 on the 30S subunit to which N-formylmethionyl-tRNA(fMet) subsequently binds. Helps modulate mRNA selection, yielding the 30S pre-initiation complex (PIC). Upon addition of the 50S ribosomal subunit IF-1, IF-2 and IF-3 are released leaving the mature 70S translation initiation complex. In Cupriavidus necator (strain ATCC 17699 / DSM 428 / KCTC 22496 / NCIMB 10442 / H16 / Stanier 337) (Ralstonia eutropha), this protein is Translation initiation factor IF-1 2.